Reading from the N-terminus, the 510-residue chain is NAD(P)H-quinone oxidoreductase subunit 2 A, chloroplastic (510 aa).

Helical transmembrane passes span 24–44 (LLLF…GLIL), 59–79 (WFYF…LFRW), 99–119 (IFQF…VEYI), 124–144 (MAIT…MFLC), 149–169 (LITL…LSGY), 183–203 (YLLM…WLYG), 229–249 (ISIA…PAPF), 295–315 (WHLL…LIAI), 323–343 (MLAY…IVGD), 354–374 (YMLF…SFGL), 395–415 (ALSL…AGFF), and 418–438 (LHLF…IGLL).

The protein belongs to the complex I subunit 2 family. As to quaternary structure, NDH is composed of at least 16 different subunits, 5 of which are encoded in the nucleus.

It localises to the plastid. Its subcellular location is the chloroplast thylakoid membrane. The catalysed reaction is a plastoquinone + NADH + (n+1) H(+)(in) = a plastoquinol + NAD(+) + n H(+)(out). The enzyme catalyses a plastoquinone + NADPH + (n+1) H(+)(in) = a plastoquinol + NADP(+) + n H(+)(out). NDH shuttles electrons from NAD(P)H:plastoquinone, via FMN and iron-sulfur (Fe-S) centers, to quinones in the photosynthetic chain and possibly in a chloroplast respiratory chain. The immediate electron acceptor for the enzyme in this species is believed to be plastoquinone. Couples the redox reaction to proton translocation, and thus conserves the redox energy in a proton gradient. The polypeptide is NAD(P)H-quinone oxidoreductase subunit 2 A, chloroplastic (Dioscorea elephantipes (Elephant's foot yam)).